Consider the following 61-residue polypeptide: Small ribosomal subunit protein uS14 (61 aa).

Cys-24, Cys-27, Cys-40, and Cys-43 together coordinate Zn(2+).

Belongs to the universal ribosomal protein uS14 family. Zinc-binding uS14 subfamily. Part of the 30S ribosomal subunit. Contacts proteins S3 and S10. It depends on Zn(2+) as a cofactor.

Its function is as follows. Binds 16S rRNA, required for the assembly of 30S particles and may also be responsible for determining the conformation of the 16S rRNA at the A site. The polypeptide is Small ribosomal subunit protein uS14 (Geotalea daltonii (strain DSM 22248 / JCM 15807 / FRC-32) (Geobacter daltonii)).